We begin with the raw amino-acid sequence, 405 residues long: Growth/differentiation factor 11 (405 aa).

A signal peptide spans 1–20 (MVLAAPLLLGFLLLALELRP). Residues 21–296 (RGEAAEGPAA…VLENTKRSRR (276 aa)) constitute a propeptide that is removed on maturation. Residue asparagine 92 is glycosylated (N-linked (GlcNAc...) asparagine). 4 disulfides stabilise this stretch: cysteine 302–cysteine 312, cysteine 311–cysteine 370, cysteine 339–cysteine 402, and cysteine 343–cysteine 404.

This sequence belongs to the TGF-beta family. Homodimer; disulfide-linked. Interacts directly with ACVR2B. Interacts directly with ACVR2A. Interacts with ACVR1B, TGFBR1 and ACVR1C in an ACVR2B-dependent manner. Interacts with FST isoform 2/FS288. In terms of processing, synthesized as large precursor molecule that undergoes proteolytic cleavage by furin-like proteases. This produces an inactive form consisting of the mature C-terminal portion non-covalently bound to its cleaved N-terminal propeptide. Activation of the mature form requires additional cleavage of the propeptide by a tolloid-like metalloproteinase. In terms of tissue distribution, highly expressed in the developing limb bud, initially detected in the distal mesenchyme, and later localizing to regions around the developing bones. Is also expressed in adult dental pulp and brain.

Its subcellular location is the secreted. Secreted signal that acts globally to regulate anterior/posterior axial patterning during development. May play critical roles in patterning both mesodermal and neural tissues. It is required for proper vertebral patterning and orofacial development. Signals through activin receptors type-2, ACVR2A and ACVR2B, and activin receptors type-1, ACVR1B, ACVR1C and TGFBR1 leading to the phosphorylation of SMAD2 and SMAD3. This is Growth/differentiation factor 11 (Gdf11) from Mus musculus (Mouse).